The primary structure comprises 447 residues: UDP-N-acetylmuramate--L-alanine ligase (447 aa).

An ATP-binding site is contributed by 115–121 (GAHGKTS).

This sequence belongs to the MurCDEF family.

The protein resides in the cytoplasm. The enzyme catalyses UDP-N-acetyl-alpha-D-muramate + L-alanine + ATP = UDP-N-acetyl-alpha-D-muramoyl-L-alanine + ADP + phosphate + H(+). The protein operates within cell wall biogenesis; peptidoglycan biosynthesis. Cell wall formation. This Streptococcus thermophilus (strain CNRZ 1066) protein is UDP-N-acetylmuramate--L-alanine ligase.